A 64-amino-acid chain; its full sequence is Large ribosomal subunit protein uL29 (64 aa).

This sequence belongs to the universal ribosomal protein uL29 family.

The sequence is that of Large ribosomal subunit protein uL29 from Cupriavidus necator (strain ATCC 17699 / DSM 428 / KCTC 22496 / NCIMB 10442 / H16 / Stanier 337) (Ralstonia eutropha).